We begin with the raw amino-acid sequence, 448 residues long: Trigger factor (448 aa).

The region spanning 162–243 (GDFVQIDLNA…VRTVKEKELP (82 aa)) is the PPIase FKBP-type domain.

This sequence belongs to the FKBP-type PPIase family. Tig subfamily.

It localises to the cytoplasm. It catalyses the reaction [protein]-peptidylproline (omega=180) = [protein]-peptidylproline (omega=0). In terms of biological role, involved in protein export. Acts as a chaperone by maintaining the newly synthesized protein in an open conformation. Functions as a peptidyl-prolyl cis-trans isomerase. The sequence is that of Trigger factor from Salinispora arenicola (strain CNS-205).